A 297-amino-acid polypeptide reads, in one-letter code: Acetylglutamate kinase (297 aa).

Substrate is bound by residues 68 to 69, R90, and N195; that span reads GG.

It belongs to the acetylglutamate kinase family. ArgB subfamily.

Its subcellular location is the cytoplasm. It carries out the reaction N-acetyl-L-glutamate + ATP = N-acetyl-L-glutamyl 5-phosphate + ADP. It participates in amino-acid biosynthesis; L-arginine biosynthesis; N(2)-acetyl-L-ornithine from L-glutamate: step 2/4. In terms of biological role, catalyzes the ATP-dependent phosphorylation of N-acetyl-L-glutamate. This is Acetylglutamate kinase from Chelativorans sp. (strain BNC1).